We begin with the raw amino-acid sequence, 444 residues long: Ribosomal protein uS12 methylthiotransferase RimO (444 aa).

In terms of domain architecture, MTTase N-terminal spans 4–118 (YKIGLISLGC…IQNYIDDFFN (115 aa)). [4Fe-4S] cluster contacts are provided by Cys-13, Cys-48, Cys-81, Cys-155, Cys-159, and Cys-162. The 231-residue stretch at 141-371 (TTAKHMAYIR…MSIQQNVSSK (231 aa)) folds into the Radical SAM core domain. Residues 374-440 (KNKLEKVYKV…EYDLIGVVCD (67 aa)) form the TRAM domain.

It belongs to the methylthiotransferase family. RimO subfamily. The cofactor is [4Fe-4S] cluster.

It is found in the cytoplasm. It carries out the reaction L-aspartate(89)-[ribosomal protein uS12]-hydrogen + (sulfur carrier)-SH + AH2 + 2 S-adenosyl-L-methionine = 3-methylsulfanyl-L-aspartate(89)-[ribosomal protein uS12]-hydrogen + (sulfur carrier)-H + 5'-deoxyadenosine + L-methionine + A + S-adenosyl-L-homocysteine + 2 H(+). In terms of biological role, catalyzes the methylthiolation of an aspartic acid residue of ribosomal protein uS12. The sequence is that of Ribosomal protein uS12 methylthiotransferase RimO from Clostridium novyi (strain NT).